The primary structure comprises 420 residues: Tyrosine--tRNA ligase (420 aa).

Tyr-39 provides a ligand contact to L-tyrosine. The 'HIGH' region motif lies at Cys-44 to Ser-53. Tyr-176 and Gln-180 together coordinate L-tyrosine. A 'KMSKS' region motif is present at residues Lys-236–Thr-240. Residue Lys-239 participates in ATP binding. The region spanning Ile-349–Leu-414 is the S4 RNA-binding domain.

It belongs to the class-I aminoacyl-tRNA synthetase family. TyrS type 1 subfamily. Homodimer.

It is found in the cytoplasm. It carries out the reaction tRNA(Tyr) + L-tyrosine + ATP = L-tyrosyl-tRNA(Tyr) + AMP + diphosphate + H(+). In terms of biological role, catalyzes the attachment of tyrosine to tRNA(Tyr) in a two-step reaction: tyrosine is first activated by ATP to form Tyr-AMP and then transferred to the acceptor end of tRNA(Tyr). This is Tyrosine--tRNA ligase from Wolbachia pipientis subsp. Culex pipiens (strain wPip).